A 638-amino-acid chain; its full sequence is Phosphomethylpyrimidine synthase (638 aa).

Substrate-binding positions include N236, M265, Y294, H330, 350–352 (SRG), 391–394 (DGLR), and E430. H434 is a Zn(2+) binding site. Y457 contributes to the substrate binding site. H498 is a binding site for Zn(2+). Residues C578, C581, and C586 each coordinate [4Fe-4S] cluster. The segment covering 608-624 (AEGASQQEAEQGMQEMS) has biased composition (low complexity). Residues 608–633 (AEGASQQEAEQGMQEMSQKYKDAGRR) are disordered.

It belongs to the ThiC family. Homodimer. [4Fe-4S] cluster is required as a cofactor.

The catalysed reaction is 5-amino-1-(5-phospho-beta-D-ribosyl)imidazole + S-adenosyl-L-methionine = 4-amino-2-methyl-5-(phosphooxymethyl)pyrimidine + CO + 5'-deoxyadenosine + formate + L-methionine + 3 H(+). It participates in cofactor biosynthesis; thiamine diphosphate biosynthesis. Its function is as follows. Catalyzes the synthesis of the hydroxymethylpyrimidine phosphate (HMP-P) moiety of thiamine from aminoimidazole ribotide (AIR) in a radical S-adenosyl-L-methionine (SAM)-dependent reaction. The sequence is that of Phosphomethylpyrimidine synthase from Hahella chejuensis (strain KCTC 2396).